Here is a 309-residue protein sequence, read N- to C-terminus: NAD kinase (309 aa).

The Proton acceptor role is filled by Asp-89. Residues 89–90 (DG), 163–164 (NE), His-174, Arg-191, Asp-193, and 204–209 (TAYALS) each bind NAD(+).

Belongs to the NAD kinase family. A divalent metal cation serves as cofactor.

The protein resides in the cytoplasm. It catalyses the reaction NAD(+) + ATP = ADP + NADP(+) + H(+). Its function is as follows. Involved in the regulation of the intracellular balance of NAD and NADP, and is a key enzyme in the biosynthesis of NADP. Catalyzes specifically the phosphorylation on 2'-hydroxyl of the adenosine moiety of NAD to yield NADP. The sequence is that of NAD kinase from Shewanella sp. (strain W3-18-1).